A 49-amino-acid polypeptide reads, in one-letter code: Large ribosomal subunit protein bL33 (49 aa).

Belongs to the bacterial ribosomal protein bL33 family.

The chain is Large ribosomal subunit protein bL33 from Alkaliphilus metalliredigens (strain QYMF).